The following is a 463-amino-acid chain: Cytoplasmic 60S subunit biogenesis factor SPCC550.15c (463 aa).

C2H2-type zinc fingers lie at residues 5–30 and 70–94; these read FACTTCTVAFNNAESQKIHWKSDWHH and QNCEVCNKKFYSEGAYSSHMASKKH. The interval 109–136 is disordered; sequence KLQSEDASSIASSTLSMGEPVVDSEIEE. Over residues 113 to 124 the composition is skewed to polar residues; that stretch reads EDASSIASSTLS. Phosphoserine occurs at positions 150 and 155. Positions 155–189 are disordered; it reads SLHGRESEPSKTELATSIPQSNEASKSHLFTQEPT. Positions 167-188 are enriched in polar residues; the sequence is ELATSIPQSNEASKSHLFTQEP. 2 consecutive C2H2-type zinc fingers follow at residues 208–231 and 259–283; these read RDCLFCAASFSSFDTCKKHMKASH and FTCLTCNREFKSLEAVRAHMQQKGH. Positions 317 to 338 are enriched in acidic residues; it reads TVVEEDGSSGEGDWEDVSDDSD. Disordered stretches follow at residues 317-341 and 444-463; these read TVVEEDGSSGEGDWEDVSDDSDNSS and ANKMGIKNNTKKHFRDALLQ.

The protein belongs to the REI1 family. In terms of assembly, associates with nascent pre-60S particles that have not yet entered the translating pool, and is released from mature 60S subunits.

Its subcellular location is the cytoplasm. Functionally, pre-60S-associated factor involved in the cytoplasmic maturation of the 60S subunit. Involved in the dissociation and recycling of other late pre-60S factors before newly synthesized large ribosomal subunits enter translation. The sequence is that of Cytoplasmic 60S subunit biogenesis factor SPCC550.15c from Schizosaccharomyces pombe (strain 972 / ATCC 24843) (Fission yeast).